The primary structure comprises 245 residues: MAAAIASSLIRQKRQAREREKSNACKCVSSPSKGKTSCDKNKLNVFSRVKLFGSKKRRRRRPEPQLKGIVTKLYSRQGYHLQLQADGTIDGTKDEDSTYTLFNLIPVGLRVVAIQGVQTKLYLAMNSEGYLYTSELFTPECKFKESVFENYYVTYSSMIYRQQQSGRGWYLGLNKEGEIMKGNHVKKNKPAAHFLPKPLKVAMYKEPSLHDLTEFSRSGSGTPTKSRSVSGVLNGGKSMSHNEST.

The segment at 1-36 (MAAAIASSLIRQKRQAREREKSNACKCVSSPSKGKT) is disordered. Residues 1-62 (MAAAIASSLI…GSKKRRRRRP (62 aa)) form a mediates targeting to the nucleus region. The interval 67 to 201 (KGIVTKLYSR…AHFLPKPLKV (135 aa)) is mediates interaction with sodium channels. Ser-208 is subject to Phosphoserine. A disordered region spans residues 213–245 (TEFSRSGSGTPTKSRSVSGVLNGGKSMSHNEST). Residues 215–245 (FSRSGSGTPTKSRSVSGVLNGGKSMSHNEST) are compositionally biased toward polar residues.

This sequence belongs to the heparin-binding growth factors family. In terms of assembly, interacts with SCN8A; regulates SCN8A activity. Interacts with SCN1A; may regulate SCN1A activity. Interacts with SCN5A; the interaction is direct and may regulate SNC5A density at membranes and function. May also interact with SCN2A and SCN11A. Interacts with MAPK8IP2; may regulate the MAPK8IP2 scaffolding activity. May be phosphorylated. In terms of tissue distribution, ubiquitously expressed. Predominantly expressed in the nervous system.

It is found in the nucleus. The protein resides in the cytoplasm. Its subcellular location is the cell projection. The protein localises to the filopodium. It localises to the growth cone. It is found in the dendrite. The protein resides in the cell membrane. Its subcellular location is the sarcolemma. Microtubule-binding protein which directly binds tubulin and is involved in both polymerization and stabilization of microtubules. Through its action on microtubules, may participate in the refinement of axons by negatively regulating axonal and leading processes branching. Plays a crucial role in neuron polarization and migration in the cerebral cortex and the hippocampus. Regulates voltage-gated sodium channel transport and function. May also play a role in MAPK signaling. Required for the development of axonal initial segment-targeting inhibitory GABAergic synapses made by chandelier neurons. This chain is Fibroblast growth factor 13, found in Homo sapiens (Human).